Consider the following 284-residue polypeptide: RNase adapter protein RapZ (284 aa).

8-15 contributes to the ATP binding site; the sequence is GRSGSGKS. Position 56–59 (56–59) interacts with GTP; that stretch reads DVRN. Positions 266–284 are RNA-binding; the sequence is RSRGKNVQLRHRTLEKRKE.

Belongs to the RapZ-like family. RapZ subfamily. As to quaternary structure, homotrimer.

Functionally, modulates the synthesis of GlmS, by affecting the processing and stability of the regulatory small RNA GlmZ. When glucosamine-6-phosphate (GlcN6P) concentrations are high in the cell, RapZ binds GlmZ and targets it to cleavage by RNase E. Consequently, GlmZ is inactivated and unable to activate GlmS synthesis. Under low GlcN6P concentrations, RapZ is sequestered and inactivated by an other regulatory small RNA, GlmY, preventing GlmZ degradation and leading to synthesis of GlmS. This is RNase adapter protein RapZ from Hamiltonella defensa subsp. Acyrthosiphon pisum (strain 5AT).